Reading from the N-terminus, the 274-residue chain is Undecaprenyl-diphosphatase (274 aa).

7 consecutive transmembrane segments (helical) span residues 40-60 (PGAA…LMFF), 90-110 (WFII…KDVI), 114-134 (FRSL…LGVA), 147-167 (ISLR…IPGV), 190-210 (YAFL…LKDI), 221-241 (PTIV…AWLL), and 252-272 (FVLY…TGVI).

This sequence belongs to the UppP family.

Its subcellular location is the cell membrane. The catalysed reaction is di-trans,octa-cis-undecaprenyl diphosphate + H2O = di-trans,octa-cis-undecaprenyl phosphate + phosphate + H(+). Catalyzes the dephosphorylation of undecaprenyl diphosphate (UPP). Confers resistance to bacitracin. In Nocardioides sp. (strain ATCC BAA-499 / JS614), this protein is Undecaprenyl-diphosphatase.